Reading from the N-terminus, the 177-residue chain is Ecotin (177 aa).

The first 23 residues, Met-1–Glu-23, serve as a signal peptide directing secretion. Cys-83 and Cys-122 are oxidised to a cystine.

It belongs to the protease inhibitor I11 (ecotin) family. Homodimer.

It localises to the periplasm. Its function is as follows. General inhibitor of family S1 serine proteases. The polypeptide is Ecotin (Prochlorococcus marinus (strain MIT 9313)).